The sequence spans 360 residues: MAKEALPSIYDYTLDELKEILKPSFRAKQVYNWLYKKYASSYDEMKNLPKELVEDLKENYPIDIMQIVKKEQSRDGSIKYLFKLRDNHTVEAVLLLMKDKKIDEDGQIVRSEKYTVCISSQVGCKVGCSFCLTAKGGFVRNLTVGEYIAQIVNIKRDNDIAENKALNIVYMGMGEPLDNFDNFTKAVEIFSELDGLAISRRRQTVSTSGIATKIKKLGEKDLQIQLAISLHAVDDELRSELIPMNKAYNIASIIQAVKAFPVDTRKKVMFEYLVIKDKNDSIEAAKKLVSLLNGIQAKVNLIYFNPYPGTSYQRPQEKDMLKFKDFLNQKGVICTIRESKGLDISAACGQLKEKEANGNS.

Glutamate 91 acts as the Proton acceptor in catalysis. One can recognise a Radical SAM core domain in the interval 110-343 (RSEKYTVCIS…CTIRESKGLD (234 aa)). A disulfide bridge connects residues cysteine 117 and cysteine 348. Positions 124, 128, and 131 each coordinate [4Fe-4S] cluster. S-adenosyl-L-methionine-binding positions include 174 to 175 (GE), serine 206, 229 to 231 (SLH), and asparagine 305. The S-methylcysteine intermediate role is filled by cysteine 348.

Belongs to the radical SAM superfamily. RlmN family. [4Fe-4S] cluster serves as cofactor.

Its subcellular location is the cytoplasm. The catalysed reaction is adenosine(2503) in 23S rRNA + 2 reduced [2Fe-2S]-[ferredoxin] + 2 S-adenosyl-L-methionine = 2-methyladenosine(2503) in 23S rRNA + 5'-deoxyadenosine + L-methionine + 2 oxidized [2Fe-2S]-[ferredoxin] + S-adenosyl-L-homocysteine. It catalyses the reaction adenosine(37) in tRNA + 2 reduced [2Fe-2S]-[ferredoxin] + 2 S-adenosyl-L-methionine = 2-methyladenosine(37) in tRNA + 5'-deoxyadenosine + L-methionine + 2 oxidized [2Fe-2S]-[ferredoxin] + S-adenosyl-L-homocysteine. Its function is as follows. Specifically methylates position 2 of adenine 2503 in 23S rRNA and position 2 of adenine 37 in tRNAs. m2A2503 modification seems to play a crucial role in the proofreading step occurring at the peptidyl transferase center and thus would serve to optimize ribosomal fidelity. The polypeptide is Dual-specificity RNA methyltransferase RlmN (Aliarcobacter butzleri (strain RM4018) (Arcobacter butzleri)).